We begin with the raw amino-acid sequence, 154 residues long: UPF0178 protein in pahZ1 5'region (154 aa).

This sequence belongs to the UPF0178 family.

This is UPF0178 protein in pahZ1 5'region from Paucimonas lemoignei (Pseudomonas lemoignei).